A 581-amino-acid chain; its full sequence is Potassium-transporting ATPase potassium-binding subunit (581 aa).

A run of 12 helical transmembrane segments spans residues 2-22, 74-94, 135-155, 177-197, 255-275, 284-304, 332-352, 357-377, 381-401, 421-441, 501-521, and 550-570; these read LQGWIQIALTILIIVAITPFF, AVIAILVFSLIAGQGVLPLNP, GLGYQMFTSAGTGLAVGIAFI, ILLPISIVGAIALIIAGVPET, LVQLVAILSIPTSLIYTYGVF, LIYLIPLGIFIGFTIITAIGE, WAQSALYAVTTTATMCGAVIA, LMPNGGFATLSNLFLQIVFGG, GTAYLFAYLILAVFVTGLMVG, FLILLVHPIAILIPGAIALAF, LSACFSLLAGRYIPIAALLLL, and AGVILILGALTFLPILALGPI.

This sequence belongs to the KdpA family. In terms of assembly, the system is composed of three essential subunits: KdpA, KdpB and KdpC.

The protein resides in the cell inner membrane. Its function is as follows. Part of the high-affinity ATP-driven potassium transport (or Kdp) system, which catalyzes the hydrolysis of ATP coupled with the electrogenic transport of potassium into the cytoplasm. This subunit binds the periplasmic potassium ions and delivers the ions to the membrane domain of KdpB through an intramembrane tunnel. The polypeptide is Potassium-transporting ATPase potassium-binding subunit (Microcystis aeruginosa (strain NIES-843 / IAM M-2473)).